Reading from the N-terminus, the 408-residue chain is UDP-N-acetylglucosamine--N-acetylmuramyl-(pentapeptide) pyrophosphoryl-undecaprenol N-acetylglucosamine transferase (408 aa).

Residues 1–20 (MNDTVKKPTGGRGDDPLPAG) form a disordered region. UDP-N-acetyl-alpha-D-glucosamine contacts are provided by residues 41–43 (TAG), Asn160, Arg197, Ser231, and Gln327.

This sequence belongs to the glycosyltransferase 28 family. MurG subfamily.

It is found in the cell membrane. The catalysed reaction is di-trans,octa-cis-undecaprenyl diphospho-N-acetyl-alpha-D-muramoyl-L-alanyl-D-glutamyl-meso-2,6-diaminopimeloyl-D-alanyl-D-alanine + UDP-N-acetyl-alpha-D-glucosamine = di-trans,octa-cis-undecaprenyl diphospho-[N-acetyl-alpha-D-glucosaminyl-(1-&gt;4)]-N-acetyl-alpha-D-muramoyl-L-alanyl-D-glutamyl-meso-2,6-diaminopimeloyl-D-alanyl-D-alanine + UDP + H(+). It participates in cell wall biogenesis; peptidoglycan biosynthesis. Functionally, cell wall formation. Catalyzes the transfer of a GlcNAc subunit on undecaprenyl-pyrophosphoryl-MurNAc-pentapeptide (lipid intermediate I) to form undecaprenyl-pyrophosphoryl-MurNAc-(pentapeptide)GlcNAc (lipid intermediate II). The sequence is that of UDP-N-acetylglucosamine--N-acetylmuramyl-(pentapeptide) pyrophosphoryl-undecaprenol N-acetylglucosamine transferase from Mycobacterium avium (strain 104).